The chain runs to 389 residues: Mating-type protein MAT-1 (389 aa).

Positions 70–127 (KAKKALNAFVGFRCYYISIPHFKSWPMKKLSNLIGLLWETDPNKSLWSLMTKAWSAIR) form a DNA-binding region, alpha box.

It belongs to the MATALPHA1 family.

It localises to the nucleus. Functionally, mating type proteins are sequence specific DNA-binding proteins that act as master switches in fungal differentiation by controlling gene expression in a cell type-specific fashion. Transcriptional activator that induces the transcription of alpha-specific genes. The polypeptide is Mating-type protein MAT-1 (MAT1) (Alternaria alternata (Alternaria rot fungus)).